Consider the following 289-residue polypeptide: Phosphatidylglycerol--prolipoprotein diacylglyceryl transferase (289 aa).

The next 4 helical transmembrane spans lie at 18 to 38 (FTIY…YVMA), 54 to 74 (DFVM…YVIF), 86 to 106 (VFYI…GVLT), and 116 to 136 (LSFW…QAIG). Arginine 137 contributes to the a 1,2-diacyl-sn-glycero-3-phospho-(1'-sn-glycerol) binding site. Helical transmembrane passes span 177-197 (HPTF…LLLL), 205-225 (GELF…IEGM), and 236-256 (LRTA…LWWY).

It belongs to the Lgt family.

It localises to the cell membrane. It catalyses the reaction L-cysteinyl-[prolipoprotein] + a 1,2-diacyl-sn-glycero-3-phospho-(1'-sn-glycerol) = an S-1,2-diacyl-sn-glyceryl-L-cysteinyl-[prolipoprotein] + sn-glycerol 1-phosphate + H(+). It participates in protein modification; lipoprotein biosynthesis (diacylglyceryl transfer). Functionally, catalyzes the transfer of the diacylglyceryl group from phosphatidylglycerol to the sulfhydryl group of the N-terminal cysteine of a prolipoprotein, the first step in the formation of mature lipoproteins. In Halalkalibacterium halodurans (strain ATCC BAA-125 / DSM 18197 / FERM 7344 / JCM 9153 / C-125) (Bacillus halodurans), this protein is Phosphatidylglycerol--prolipoprotein diacylglyceryl transferase.